We begin with the raw amino-acid sequence, 156 residues long: MVRRFKRGTKYRRGSRTHGWGRVGQHRKSGGSGGKGMVGFHKHKWSLVMKYGESGTGWPFYGKHGFKQPPPISIEWRPINVGTLAELVKELKAEGKVREEGGKYVINLLELGFNKLLGGGTIDLPVIVYTPIASRTAVEKIEKAGGEVRIIHVIHR.

Residues 1–16 show a composition bias toward basic residues; sequence MVRRFKRGTKYRRGSR. Positions 1–37 are disordered; that stretch reads MVRRFKRGTKYRRGSRTHGWGRVGQHRKSGGSGGKGM.

The protein belongs to the universal ribosomal protein uL15 family. As to quaternary structure, part of the 50S ribosomal subunit.

Binds to the 23S rRNA. The protein is Large ribosomal subunit protein uL15 of Pyrobaculum aerophilum (strain ATCC 51768 / DSM 7523 / JCM 9630 / CIP 104966 / NBRC 100827 / IM2).